The chain runs to 117 residues: uncharacterized protein (117 aa).

Residues methionine 1 to glycine 38 form the signal peptide.

It is found in the secreted. This is an uncharacterized protein from Homo sapiens (Human).